We begin with the raw amino-acid sequence, 63 residues long: Cytochrome c oxidase subunit 7C, mitochondrial (63 aa).

Residues 1 to 16 (MWGQGVRRFTTSVVRR) constitute a mitochondrion transit peptide. Over 17-33 (SHYEEGPGKNLPFSVEN) the chain is Mitochondrial matrix. Lys-25 carries the post-translational modification N6-acetyllysine; alternate. Position 25 is an N6-succinyllysine; alternate (Lys-25). A helical transmembrane segment spans residues 34–60 (KWRLLAMMTLYLGSGFAAPFFIVRHQL). Residues 61–63 (LKK) are Mitochondrial intermembrane-facing.

The protein belongs to the cytochrome c oxidase VIIc family. In terms of assembly, component of the cytochrome c oxidase (complex IV, CIV), a multisubunit enzyme composed of 14 subunits. The complex is composed of a catalytic core of 3 subunits MT-CO1, MT-CO2 and MT-CO3, encoded in the mitochondrial DNA, and 11 supernumerary subunits COX4I, COX5A, COX5B, COX6A, COX6B, COX6C, COX7A, COX7B, COX7C, COX8 and NDUFA4, which are encoded in the nuclear genome. The complex exists as a monomer or a dimer and forms supercomplexes (SCs) in the inner mitochondrial membrane with NADH-ubiquinone oxidoreductase (complex I, CI) and ubiquinol-cytochrome c oxidoreductase (cytochrome b-c1 complex, complex III, CIII), resulting in different assemblies (supercomplex SCI(1)III(2)IV(1) and megacomplex MCI(2)III(2)IV(2)). Interacts with RAB5IF.

Its subcellular location is the mitochondrion inner membrane. It participates in energy metabolism; oxidative phosphorylation. In terms of biological role, component of the cytochrome c oxidase, the last enzyme in the mitochondrial electron transport chain which drives oxidative phosphorylation. The respiratory chain contains 3 multisubunit complexes succinate dehydrogenase (complex II, CII), ubiquinol-cytochrome c oxidoreductase (cytochrome b-c1 complex, complex III, CIII) and cytochrome c oxidase (complex IV, CIV), that cooperate to transfer electrons derived from NADH and succinate to molecular oxygen, creating an electrochemical gradient over the inner membrane that drives transmembrane transport and the ATP synthase. Cytochrome c oxidase is the component of the respiratory chain that catalyzes the reduction of oxygen to water. Electrons originating from reduced cytochrome c in the intermembrane space (IMS) are transferred via the dinuclear copper A center (CU(A)) of subunit 2 and heme A of subunit 1 to the active site in subunit 1, a binuclear center (BNC) formed by heme A3 and copper B (CU(B)). The BNC reduces molecular oxygen to 2 water molecules using 4 electrons from cytochrome c in the IMS and 4 protons from the mitochondrial matrix. This is Cytochrome c oxidase subunit 7C, mitochondrial (COX7C) from Carlito syrichta (Philippine tarsier).